The primary structure comprises 310 residues: 4-diphosphocytidyl-2-C-methyl-D-erythritol kinase (310 aa).

Lysine 11 is an active-site residue. 95–105 (PIGAGLAGGSA) is a binding site for ATP. Aspartate 137 is an active-site residue.

It belongs to the GHMP kinase family. IspE subfamily.

It carries out the reaction 4-CDP-2-C-methyl-D-erythritol + ATP = 4-CDP-2-C-methyl-D-erythritol 2-phosphate + ADP + H(+). Its pathway is isoprenoid biosynthesis; isopentenyl diphosphate biosynthesis via DXP pathway; isopentenyl diphosphate from 1-deoxy-D-xylulose 5-phosphate: step 3/6. Its function is as follows. Catalyzes the phosphorylation of the position 2 hydroxy group of 4-diphosphocytidyl-2C-methyl-D-erythritol. The chain is 4-diphosphocytidyl-2-C-methyl-D-erythritol kinase from Acaryochloris marina (strain MBIC 11017).